Reading from the N-terminus, the 72-residue chain is Translation initiation factor IF-1 (72 aa).

Residues 1–72 form the S1-like domain; sequence MAKEDVIEFS…TKGRITFRYK (72 aa).

This sequence belongs to the IF-1 family. Component of the 30S ribosomal translation pre-initiation complex which assembles on the 30S ribosome in the order IF-2 and IF-3, IF-1 and N-formylmethionyl-tRNA(fMet); mRNA recruitment can occur at any time during PIC assembly.

The protein localises to the cytoplasm. In terms of biological role, one of the essential components for the initiation of protein synthesis. Stabilizes the binding of IF-2 and IF-3 on the 30S subunit to which N-formylmethionyl-tRNA(fMet) subsequently binds. Helps modulate mRNA selection, yielding the 30S pre-initiation complex (PIC). Upon addition of the 50S ribosomal subunit IF-1, IF-2 and IF-3 are released leaving the mature 70S translation initiation complex. This Paramagnetospirillum magneticum (strain ATCC 700264 / AMB-1) (Magnetospirillum magneticum) protein is Translation initiation factor IF-1.